The following is a 336-amino-acid chain: Protein ABHD13 (336 aa).

A helical; Signal-anchor for type II membrane protein transmembrane segment spans residues 37-57 (FNMYGGVILLLLIFVSIAGIL). Residues serine 193, aspartate 268, and histidine 298 each act as charge relay system in the active site. Asparagine 299 carries N-linked (GlcNAc...) asparagine glycosylation.

Belongs to the serine esterase family.

Its subcellular location is the membrane. The sequence is that of Protein ABHD13 from Xenopus laevis (African clawed frog).